A 154-amino-acid polypeptide reads, in one-letter code: Ribonuclease H (154 aa).

Positions 1 to 142 constitute an RNase H type-1 domain; sequence MLKKIDLYTD…CDELAREAAS (142 aa). Residues Asp10, Glu48, Asp70, and Asp134 each contribute to the Mg(2+) site. Residues 133-154 are disordered; it reads CDELAREAASGKQLAEDTGYQP.

The protein belongs to the RNase H family. Monomer. Mg(2+) is required as a cofactor.

The protein resides in the cytoplasm. It catalyses the reaction Endonucleolytic cleavage to 5'-phosphomonoester.. Endonuclease that specifically degrades the RNA of RNA-DNA hybrids. The protein is Ribonuclease H of Aeromonas hydrophila subsp. hydrophila (strain ATCC 7966 / DSM 30187 / BCRC 13018 / CCUG 14551 / JCM 1027 / KCTC 2358 / NCIMB 9240 / NCTC 8049).